The chain runs to 773 residues: DEAD-box ATP-dependent RNA helicase 32 (773 aa).

Residues isoleucine 28–glycine 71 are disordered. Positions serine 43–lysine 56 are enriched in low complexity. The short motif at alanine 80–arginine 108 is the Q motif element. Residues leucine 111–isoleucine 287 form the Helicase ATP-binding domain. Alanine 124–threonine 131 provides a ligand contact to ATP. Residues aspartate 235–aspartate 238 carry the DEAD box motif. Positions proline 309–glutamine 462 constitute a Helicase C-terminal domain. Positions aspartate 664–alanine 715 form a coiled coil. The segment covering leucine 699–lysine 708 has biased composition (basic residues). The segment at leucine 699–aspartate 755 is disordered.

This sequence belongs to the DEAD box helicase family. DDX10/DBP4 subfamily.

It carries out the reaction ATP + H2O = ADP + phosphate + H(+). This is DEAD-box ATP-dependent RNA helicase 32 from Oryza sativa subsp. japonica (Rice).